The chain runs to 424 residues: Arogenate dehydratase 3, chloroplastic (424 aa).

The N-terminal 24 residues, Met1–His24, are a transit peptide targeting the chloroplast. Residues Glu57–Ser71 are compositionally biased toward low complexity. Residues Glu57–Val77 are disordered. One can recognise a Prephenate dehydratase domain in the interval Arg122–Arg299. An ACT domain is found at Ser313–Pro404.

In terms of assembly, may interact with GPA1. As to expression, expressed in roots, leaves, stems, flowers and siliques.

The protein localises to the plastid. It localises to the chloroplast stroma. It catalyses the reaction L-arogenate + H(+) = L-phenylalanine + CO2 + H2O. Its pathway is amino-acid biosynthesis; L-phenylalanine biosynthesis; L-phenylalanine from L-arogenate: step 1/1. In terms of biological role, converts the prephenate produced from the shikimate-chorismate pathway into phenylalanine. Together with GCR1 and GPA1, required for blue light-mediated synthesis of phenylpyruvate and subsequently of phenylalanine (Phe), in etiolated seedlings. This is Arogenate dehydratase 3, chloroplastic from Arabidopsis thaliana (Mouse-ear cress).